We begin with the raw amino-acid sequence, 380 residues long: Cytochrome b (380 aa).

The next 4 membrane-spanning stretches (helical) occupy residues 34-54, 78-99, 114-134, and 179-199; these read FGSL…LLAM, WLIR…YLHI, WNTG…GYVL, and FFAL…IHLT. His84 and His98 together coordinate heme b. Heme b is bound by residues His183 and His197. His202 provides a ligand contact to a ubiquinone. A run of 4 helical transmembrane segments spans residues 227-247, 289-309, 321-341, and 348-368; these read TKDI…AMFA, LGGV…PFLH, LSQL…WIGS, and FIIT…ILFP.

The protein belongs to the cytochrome b family. In terms of assembly, the cytochrome bc1 complex contains 11 subunits: 3 respiratory subunits (MT-CYB, CYC1 and UQCRFS1), 2 core proteins (UQCRC1 and UQCRC2) and 6 low-molecular weight proteins (UQCRH/QCR6, UQCRB/QCR7, UQCRQ/QCR8, UQCR10/QCR9, UQCR11/QCR10 and a cleavage product of UQCRFS1). This cytochrome bc1 complex then forms a dimer. The cofactor is heme b.

Its subcellular location is the mitochondrion inner membrane. Functionally, component of the ubiquinol-cytochrome c reductase complex (complex III or cytochrome b-c1 complex) that is part of the mitochondrial respiratory chain. The b-c1 complex mediates electron transfer from ubiquinol to cytochrome c. Contributes to the generation of a proton gradient across the mitochondrial membrane that is then used for ATP synthesis. This Aphanotriccus audax (Black-billed flycatcher) protein is Cytochrome b (MT-CYB).